The sequence spans 726 residues: Methyltransferase FGSG_00040 (726 aa).

TPR repeat units lie at residues 187–220 (SSDI…GQNV), 224–257 (QLAF…AMPS), and 258–291 (EKSL…YPEN). One can recognise an SET domain in the interval 336–531 (APVEIRESPG…AKTEIFFCYR (196 aa)). Tyrosine 530 is a binding site for S-adenosyl-L-methionine.

The protein belongs to the class V-like SAM-binding methyltransferase superfamily.

The protein operates within mycotoxin biosynthesis. Methyltransferase; part of the gene cluster that mediates the biosynthesis of gramillins A and B, bicyclic lipopeptides that induce cell death in maize leaves but not in wheat leaves. The nonribosomal peptide synthetase GRA1 incorporates respectively a glutamic adic (Glu), a leucine (Leu), a serine (Ser), a hydroxyglutamine (HOGln), a 2-amino decanoic acid, and 2 cysteins (CysB and CysA). The biosynthesis of 2-amino decanoic acid incorporated in gramillins could be initiated by a fatty acid synthase composed of the alpha and beta subunits FGSG_00036 and FGSG_11656. The cytochrome P450 monooxygenase FGSG_15680 could hydroxylate the fatty acid chain. Subsequent oxidation to the ketone by the oxidoreductase FGSG_00048 and transamination by aminotransferase FGSG_00049 could form 2-amino-decanoic acid. On the other hand, FGSG_15680 could also be responsible for the HO-modified glutamine at the gamma-position. Whether hydroxylation occurs on the fully assembled product or on the Gln residue prior to assembly into the gramillins requires further proof. The thioredoxin FGSG_00043 could also be required for the disulfide-bond formation between CysA and CysB. The specific involvement of the remaining proteins from the cluster is more difficult to discern, but could have broader regulatory (FGSG_00040 and FGSG_11657) or enzymatic functions (FGSG_00044 and FGSG_00045). The final C-domain of GRA1 does not possess the expected sequence of a termination CT domain, often implicated in macrocyclization and release of a cyclopeptidein fungal NRPs; and the thioesterase FGSG_00047 may act in concert with the terminal C-domain of GRA1 to catalyze the formation of the macrocyclic anhydride and release of the products. The sequence is that of Methyltransferase FGSG_00040 from Gibberella zeae (strain ATCC MYA-4620 / CBS 123657 / FGSC 9075 / NRRL 31084 / PH-1) (Wheat head blight fungus).